The chain runs to 198 residues: Recombination protein RecR (198 aa).

The C4-type zinc finger occupies 57 to 72; it reads CSECQTLTDKDPCAVC. The Toprim domain maps to 80-175; sequence RIICVVEGVP…KVTRIAQGIP (96 aa).

This sequence belongs to the RecR family.

Its function is as follows. May play a role in DNA repair. It seems to be involved in an RecBC-independent recombinational process of DNA repair. It may act with RecF and RecO. In Anaeromyxobacter sp. (strain Fw109-5), this protein is Recombination protein RecR.